The primary structure comprises 336 residues: Ketol-acid reductoisomerase (NADP(+)) (336 aa).

In terms of domain architecture, KARI N-terminal Rossmann spans 3–183 (AKMYYDRDVD…GCTKAGVLET (181 aa)). Residues 26 to 29 (YGSQ), R49, S52, S54, and 84 to 87 (DEQQ) each bind NADP(+). Residue H109 is part of the active site. G135 lines the NADP(+) pocket. A KARI C-terminal knotted domain is found at 184–329 (TFKEETETDL…KELRDQMPFI (146 aa)). Mg(2+) is bound by residues D192, E196, E228, and E232. Residue S253 participates in substrate binding.

It belongs to the ketol-acid reductoisomerase family. It depends on Mg(2+) as a cofactor.

The enzyme catalyses (2R)-2,3-dihydroxy-3-methylbutanoate + NADP(+) = (2S)-2-acetolactate + NADPH + H(+). It carries out the reaction (2R,3R)-2,3-dihydroxy-3-methylpentanoate + NADP(+) = (S)-2-ethyl-2-hydroxy-3-oxobutanoate + NADPH + H(+). Its pathway is amino-acid biosynthesis; L-isoleucine biosynthesis; L-isoleucine from 2-oxobutanoate: step 2/4. It participates in amino-acid biosynthesis; L-valine biosynthesis; L-valine from pyruvate: step 2/4. Its function is as follows. Involved in the biosynthesis of branched-chain amino acids (BCAA). Catalyzes an alkyl-migration followed by a ketol-acid reduction of (S)-2-acetolactate (S2AL) to yield (R)-2,3-dihydroxy-isovalerate. In the isomerase reaction, S2AL is rearranged via a Mg-dependent methyl migration to produce 3-hydroxy-3-methyl-2-ketobutyrate (HMKB). In the reductase reaction, this 2-ketoacid undergoes a metal-dependent reduction by NADPH to yield (R)-2,3-dihydroxy-isovalerate. The chain is Ketol-acid reductoisomerase (NADP(+)) from Deinococcus radiodurans (strain ATCC 13939 / DSM 20539 / JCM 16871 / CCUG 27074 / LMG 4051 / NBRC 15346 / NCIMB 9279 / VKM B-1422 / R1).